The primary structure comprises 302 residues: Probable 2-(5''-triphosphoribosyl)-3'-dephosphocoenzyme-A synthase (302 aa).

Belongs to the CitG/MdcB family.

The enzyme catalyses 3'-dephospho-CoA + ATP = 2'-(5''-triphospho-alpha-D-ribosyl)-3'-dephospho-CoA + adenine. The chain is Probable 2-(5''-triphosphoribosyl)-3'-dephosphocoenzyme-A synthase from Salmonella gallinarum (strain 287/91 / NCTC 13346).